The primary structure comprises 401 residues: Elongation factor Tu (401 aa).

In terms of domain architecture, tr-type G spans 10–211 (KPHLNIGTIG…AVDTYVPNPT (202 aa)). A G1 region spans residues 19–26 (GHVDHGKT). Residue 19-26 (GHVDHGKT) coordinates GTP. Thr-26 is a binding site for Mg(2+). The tract at residues 62-66 (GITIA) is G2. Residues 83–86 (DCPG) form a G3 region. GTP contacts are provided by residues 83–87 (DCPGH) and 138–141 (NKAD). Residues 138 to 141 (NKAD) form a G4 region. A G5 region spans residues 179–181 (SAL).

The protein belongs to the TRAFAC class translation factor GTPase superfamily. Classic translation factor GTPase family. EF-Tu/EF-1A subfamily. In terms of assembly, monomer.

It is found in the cytoplasm. The enzyme catalyses GTP + H2O = GDP + phosphate + H(+). In terms of biological role, GTP hydrolase that promotes the GTP-dependent binding of aminoacyl-tRNA to the A-site of ribosomes during protein biosynthesis. This chain is Elongation factor Tu, found in Leptospira biflexa serovar Patoc (strain Patoc 1 / Ames).